Consider the following 58-residue polypeptide: uncharacterized protein (58 aa).

This is an uncharacterized protein from Dictyostelium discoideum (Social amoeba).